The following is a 999-amino-acid chain: Probable beta-galactosidase C (999 aa).

Positions 1 to 21 are cleaved as a signal peptide; that stretch reads MFFFRFLTTVLLLFNAKLLVA. A glycan (N-linked (GlcNAc...) asparagine) is linked at asparagine 25. Positions 80, 125, 127, and 185 each coordinate substrate. The Proton donor role is filled by glutamate 186. Asparagine 195 carries N-linked (GlcNAc...) asparagine glycosylation. Residue tyrosine 249 coordinates substrate. Cysteine 255 and cysteine 302 are disulfide-bonded. N-linked (GlcNAc...) asparagine glycosylation occurs at asparagine 274. Catalysis depends on glutamate 285, which acts as the Nucleophile. Tyrosine 351 provides a ligand contact to substrate. Residues asparagine 389, asparagine 441, asparagine 512, asparagine 519, asparagine 600, asparagine 675, asparagine 713, asparagine 757, asparagine 808, and asparagine 897 are each glycosylated (N-linked (GlcNAc...) asparagine).

It belongs to the glycosyl hydrolase 35 family.

It is found in the secreted. It carries out the reaction Hydrolysis of terminal non-reducing beta-D-galactose residues in beta-D-galactosides.. Cleaves beta-linked terminal galactosyl residues from gangliosides, glycoproteins, and glycosaminoglycans. The chain is Probable beta-galactosidase C (lacC) from Talaromyces marneffei (strain ATCC 18224 / CBS 334.59 / QM 7333) (Penicillium marneffei).